A 206-amino-acid polypeptide reads, in one-letter code: Large ribosomal subunit protein bL17 (206 aa).

The span at 130 to 141 (ERARGTRFEARR) shows a compositional bias: basic and acidic residues. Positions 130 to 206 (ERARGTRFEA…SGAGEQNSAN (77 aa)) are disordered. Low complexity-rich tracts occupy residues 160–181 (TAAAVAVEAAEPAETPAEGAAG) and 189–200 (DDSGIGDDSGAG).

Belongs to the bacterial ribosomal protein bL17 family. As to quaternary structure, part of the 50S ribosomal subunit. Contacts protein L32.

The protein is Large ribosomal subunit protein bL17 of Frankia casuarinae (strain DSM 45818 / CECT 9043 / HFP020203 / CcI3).